A 565-amino-acid chain; its full sequence is Beta-hexosaminidase subunit beta (565 aa).

Residues 1-13 form the signal peptide; it reads MIVLLLLISYCFA. N-linked (GlcNAc...) asparagine glycosylation occurs at Asn-71. Residue Glu-347 is the Proton donor of the active site.

The protein belongs to the glycosyl hydrolase 20 family. In terms of assembly, heterodimer of one alpha subunit and one beta subunit. Glycosylated.

It localises to the cytoplasmic granule. Its subcellular location is the secreted. It carries out the reaction Hydrolysis of terminal non-reducing N-acetyl-D-hexosamine residues in N-acetyl-beta-D-hexosaminides.. Functionally, hydrolyzes the non-reducing end N-acetyl-D-hexosamine and/or sulfated N-acetyl-D-hexosamine of glycoconjugates. May contribute to amoebic pathogenicity and may be involved in the destruction of extracellular matrix components. This chain is Beta-hexosaminidase subunit beta, found in Entamoeba histolytica (strain ATCC 30459 / HM-1:IMSS / ABRM).